A 487-amino-acid polypeptide reads, in one-letter code: Transmembrane protein 161B (487 aa).

A glycan (N-linked (GlcNAc...) asparagine) is linked at Asn-34. A helical membrane pass occupies residues 107–127 (LVDFTVAATIVYLVTEVYYSF). The N-linked (GlcNAc...) asparagine glycan is linked to Asn-135. The next 2 helical transmembrane spans lie at 136-156 (ISLVWCLLVLSFAIKVLFSLT) and 169-189 (SVCVTFGFFFFVKAMAVLIVT). A glycan (N-linked (GlcNAc...) asparagine) is linked at Asn-203. 5 consecutive transmembrane segments (helical) span residues 228–248 (FKFFLAVFCSLIGAFLTFPGL), 265–285 (ITQTLLHINFLAPLFMVLLWV), 305–325 (LMTEATFDTLRLWLIILLCVL), 367–387 (VFYYLCVIALQYVAPLVMLLH), and 459–479 (LSFLTWWIAACLFSTSLFGLF).

This sequence belongs to the TMEM161 family.

The protein resides in the cell membrane. Functionally, essential for maintaining normal cardiac rhythm in the developing heart and for neonatal survival. Inhibits potassium and calcium currents in the cardiomyocytes, this assists in timely action potential repolarization and thereby maintains normal cardiac rhythm. The sequence is that of Transmembrane protein 161B (Tmem161b) from Mus musculus (Mouse).